A 467-amino-acid polypeptide reads, in one-letter code: Ribulose bisphosphate carboxylase large chain (467 aa).

Position 5 is an N6,N6,N6-trimethyllysine (Lys-5). Positions 114 and 164 each coordinate substrate. The active-site Proton acceptor is Lys-166. Substrate is bound at residue Lys-168. The Mg(2+) site is built by Lys-192, Asp-194, and Glu-195. Lys-192 is subject to N6-carboxylysine. His-285 (proton acceptor) is an active-site residue. Arg-286, His-318, and Ser-370 together coordinate substrate.

The protein belongs to the RuBisCO large chain family. Type I subfamily. In terms of assembly, heterohexadecamer of 8 large chains and 8 small chains; disulfide-linked. The disulfide link is formed within the large subunit homodimers. Mg(2+) serves as cofactor. Post-translationally, the disulfide bond which can form in the large chain dimeric partners within the hexadecamer appears to be associated with oxidative stress and protein turnover.

It localises to the plastid. Its subcellular location is the chloroplast. It carries out the reaction 2 (2R)-3-phosphoglycerate + 2 H(+) = D-ribulose 1,5-bisphosphate + CO2 + H2O. The enzyme catalyses D-ribulose 1,5-bisphosphate + O2 = 2-phosphoglycolate + (2R)-3-phosphoglycerate + 2 H(+). In terms of biological role, ruBisCO catalyzes two reactions: the carboxylation of D-ribulose 1,5-bisphosphate, the primary event in carbon dioxide fixation, as well as the oxidative fragmentation of the pentose substrate in the photorespiration process. Both reactions occur simultaneously and in competition at the same active site. The polypeptide is Ribulose bisphosphate carboxylase large chain (Scutellaria bolanderi (Sierra skullcap)).